The sequence spans 1270 residues: Nuclear exosome regulator NRDE2 (1270 aa).

Disordered stretches follow at residues 1–22 (MFRA…ENPD) and 119–209 (SVKS…HTLM). Polar residues predominate over residues 119-135 (SVKSLNGCQDPPETSQQ). Basic residues predominate over residues 164-184 (QRSRSREKKRRKKERRRKRSS). Residues 192 to 204 (RSRDRSSRARDTS) are compositionally biased toward basic and acidic residues.

Belongs to the NRDE2 family. In terms of assembly, interacts with nrde-3.

It is found in the nucleus. Its subcellular location is the nucleus speckle. The protein localises to the nucleolus. Functionally, protein of the nuclear speckles that regulates RNA exosomal degradation. Involved in short interfering RNAs-mediated silencing in nuclei. Functions with nrde-3 in the nuclear RNA-mediated gene silencing (RNAi) pathway to regulate gene expression via inhibition of RNA polymerases I and II during the elongation phase of transcription. Required for exogenous RNAi-induced H3K27 methylation. This chain is Nuclear exosome regulator NRDE2 (nrde-2), found in Caenorhabditis elegans.